Reading from the N-terminus, the 555-residue chain is Protein NRT1/ PTR FAMILY 5.12 (555 aa).

2 helical membrane-spanning segments follow: residues 53 to 73 (FAYFGIASNLITYFTEALGES) and 83 to 103 (LWLGTAAFLPLIWGSIADSFL). Residue Thr-108 is modified to Phosphothreonine. The next 10 helical transmembrane spans lie at 109 to 129 (ILLTSSFYIMGLGLLTFSATI), 148 to 168 (VIIFFCALYLIALGEGGFKVC), 190 to 210 (SYFNWLYFAISIGILTTRLVT), 221 to 241 (LGYAIPCLSMMLALFLFLLGI), 315 to 335 (AVLSLIPIWLCSLVFGIVFAQ), 357 to 377 (VPAATLQCFISLAILVFIPIY), 401 to 421 (ISTGIFLSIISMVIAALVEMK), 443 to 463 (VCWLIPQYILFGVSDVFTMVG), 482 to 502 (ALYLSIIGIGNFLSSFMVSVI), and 526 to 546 (YFYWLLACLSSLAFIFTVYFA).

Belongs to the major facilitator superfamily. Proton-dependent oligopeptide transporter (POT/PTR) (TC 2.A.17) family. In terms of tissue distribution, expressed in shoots and roots.

It is found in the membrane. In Arabidopsis thaliana (Mouse-ear cress), this protein is Protein NRT1/ PTR FAMILY 5.12 (NPF5.12).